The sequence spans 60 residues: Large ribosomal subunit protein bL32 (60 aa).

2 disordered regions span residues 1–28 (MAVQ…PGIA) and 41–60 (HISP…KSEA). Residues 9–19 (SPSKRGMHRSH) are compositionally biased toward basic residues.

Belongs to the bacterial ribosomal protein bL32 family.

This Verminephrobacter eiseniae (strain EF01-2) protein is Large ribosomal subunit protein bL32.